Here is a 910-residue protein sequence, read N- to C-terminus: DNA mismatch repair protein MutS (910 aa).

658–665 (GPNMGGKS) provides a ligand contact to ATP.

This sequence belongs to the DNA mismatch repair MutS family.

This protein is involved in the repair of mismatches in DNA. It is possible that it carries out the mismatch recognition step. This protein has a weak ATPase activity. This is DNA mismatch repair protein MutS from Brucella anthropi (strain ATCC 49188 / DSM 6882 / CCUG 24695 / JCM 21032 / LMG 3331 / NBRC 15819 / NCTC 12168 / Alc 37) (Ochrobactrum anthropi).